The sequence spans 87 residues: U3-theraphotoxin-Hhn1a 18 (87 aa).

An N-terminal signal peptide occupies residues 1–24; that stretch reads MVNTKASMFLTFAGLVLLFVVCYA. Positions 25 to 52 are excised as a propeptide; that stretch reads SESEEKEFPKEMLSSIFAVDNDFKQEER. 3 disulfide bridges follow: Cys54-Cys67, Cys61-Cys72, and Cys66-Cys79.

This sequence belongs to the neurotoxin 10 (Hwtx-1) family. 51 (Hntx-8) subfamily. Hntx-8 sub-subfamily. As to expression, expressed by the venom gland.

It is found in the secreted. In terms of biological role, ion channel inhibitor. The sequence is that of U3-theraphotoxin-Hhn1a 18 from Cyriopagopus hainanus (Chinese bird spider).